A 68-amino-acid chain; its full sequence is Putative membrane protein insertion efficiency factor (68 aa).

Belongs to the UPF0161 family.

Its subcellular location is the cell membrane. Could be involved in insertion of integral membrane proteins into the membrane. In Syntrophomonas wolfei subsp. wolfei (strain DSM 2245B / Goettingen), this protein is Putative membrane protein insertion efficiency factor.